Consider the following 239-residue polypeptide: Protein Thf1 (239 aa).

Positions 183 to 219 (ERVKKDLELYRSNLDRLKQARAIVEEMVKAARRQQER) form a coiled coil. Basic and acidic residues predominate over residues 211 to 221 (KAARRQQERRQ). A disordered region spans residues 211–239 (KAARRQQERRQSTASLPETPAADRRESSG).

It belongs to the THF1 family.

May be involved in photosynthetic membrane biogenesis. This is Protein Thf1 from Synechococcus sp. (strain JA-3-3Ab) (Cyanobacteria bacterium Yellowstone A-Prime).